The following is a 453-amino-acid chain: C4-dicarboxylate TRAP transporter large permease protein DctM (453 aa).

Transmembrane regions (helical) follow at residues alanine 2–isoleucine 22, alanine 50–methionine 70, phenylalanine 82–cysteine 102, methionine 104–isoleucine 124, glycine 139–valine 159, phenylalanine 172–isoleucine 192, alanine 217–threonine 237, alanine 243–phenylalanine 263, leucine 289–leucine 309, methionine 326–valine 346, leucine 356–isoleucine 376, isoleucine 380–phenylalanine 400, and alanine 417–valine 437.

This sequence belongs to the TRAP transporter large permease family. The complex comprises the extracytoplasmic solute receptor protein DctP, and the two transmembrane proteins DctQ and DctM.

It localises to the cell inner membrane. Part of the tripartite ATP-independent periplasmic (TRAP) transport system DctPQM involved in C4-dicarboxylates uptake. The sequence is that of C4-dicarboxylate TRAP transporter large permease protein DctM from Vibrio cholerae serotype O1 (strain ATCC 39315 / El Tor Inaba N16961).